A 509-amino-acid polypeptide reads, in one-letter code: 2-isopropylmalate synthase (509 aa).

Positions 4 to 266 (VRIFDTTLRD…YTGIKTEEIY (263 aa)) constitute a Pyruvate carboxyltransferase domain. Residues aspartate 13, histidine 201, histidine 203, and asparagine 237 each contribute to the Mn(2+) site. A regulatory domain region spans residues 390–509 (TLDYFHISTG…FDYQAKGEKQ (120 aa)).

The protein belongs to the alpha-IPM synthase/homocitrate synthase family. LeuA type 1 subfamily. Homodimer. Mn(2+) is required as a cofactor.

The protein resides in the cytoplasm. The enzyme catalyses 3-methyl-2-oxobutanoate + acetyl-CoA + H2O = (2S)-2-isopropylmalate + CoA + H(+). Its pathway is amino-acid biosynthesis; L-leucine biosynthesis; L-leucine from 3-methyl-2-oxobutanoate: step 1/4. Functionally, catalyzes the condensation of the acetyl group of acetyl-CoA with 3-methyl-2-oxobutanoate (2-ketoisovalerate) to form 3-carboxy-3-hydroxy-4-methylpentanoate (2-isopropylmalate). The sequence is that of 2-isopropylmalate synthase from Carboxydothermus hydrogenoformans (strain ATCC BAA-161 / DSM 6008 / Z-2901).